A 290-amino-acid chain; its full sequence is 4-hydroxybenzoate octaprenyltransferase (290 aa).

9 helical membrane-spanning segments follow: residues 23–43 (IGTE…SDGY), 46–66 (LKMF…GCAI), 96–116 (AIWV…FLPI), 118–138 (TFYW…MKRY), 141–161 (LPQV…YTAT), 169–189 (CWLL…QYAI), 212–232 (IPII…ALYI), 235–255 (LLFP…IYQW), and 265–285 (LCFW…LAIL).

It belongs to the UbiA prenyltransferase family. Mg(2+) is required as a cofactor.

The protein resides in the cell inner membrane. The enzyme catalyses all-trans-octaprenyl diphosphate + 4-hydroxybenzoate = 4-hydroxy-3-(all-trans-octaprenyl)benzoate + diphosphate. The protein operates within cofactor biosynthesis; ubiquinone biosynthesis. Catalyzes the prenylation of para-hydroxybenzoate (PHB) with an all-trans polyprenyl group. Mediates the second step in the final reaction sequence of ubiquinone-8 (UQ-8) biosynthesis, which is the condensation of the polyisoprenoid side chain with PHB, generating the first membrane-bound Q intermediate 3-octaprenyl-4-hydroxybenzoate. The polypeptide is 4-hydroxybenzoate octaprenyltransferase (Acinetobacter baylyi (strain ATCC 33305 / BD413 / ADP1)).